The following is a 632-amino-acid chain: MAU2 chromatid cohesion factor homolog (632 aa).

TPR repeat units follow at residues 453 to 486 (GGFYYVQGLHAFHKNSFHEAKRFLRETLKMANAE) and 493 to 526 (SCSLVLLSHVFLSIGNSKESMNMVTPAMQLASKI).

This sequence belongs to the SCC4/mau-2 family. Interacts with Nipped-B to form the cohesin loading complex.

It is found in the nucleus. The protein resides in the nucleoplasm. Required for association of the cohesin complex with chromatin during interphase. Plays a role in sister chromatid cohesion and normal progression through prometaphase. The chain is MAU2 chromatid cohesion factor homolog from Drosophila melanogaster (Fruit fly).